A 197-amino-acid polypeptide reads, in one-letter code: Cell division protein SepF (197 aa).

Disordered regions lie at residues 38 to 72 and 164 to 197; these read MPTP…TTPT and LSRE…AQAQ. Residues 58–72 are compositionally biased toward polar residues; that stretch reads TVASNFAMNSNTTPT. The segment covering 170 to 185 has biased composition (low complexity); that stretch reads PATPAAPARPAAPAPA.

Belongs to the SepF family. Homodimer. Interacts with FtsZ.

It localises to the cytoplasm. Cell division protein that is part of the divisome complex and is recruited early to the Z-ring. Probably stimulates Z-ring formation, perhaps through the cross-linking of FtsZ protofilaments. Its function overlaps with FtsA. In Picosynechococcus sp. (strain ATCC 27264 / PCC 7002 / PR-6) (Agmenellum quadruplicatum), this protein is Cell division protein SepF.